The primary structure comprises 471 residues: Cell division protein FtsP (471 aa).

Residues 1-27 constitute a signal peptide (tat-type signal); the sequence is MSLNRRQFIQASGLALCAGMTPLAAKA. One can recognise a Plastocyanin-like domain in the interval 229 to 287; sequence VRLRLLNASNSRRYVMRLSDGRAMNVIASDQGLLPAPMAVNQLSLAPGERREILIDMSQ.

It belongs to the FtsP family. Predicted to be exported by the Tat system. The position of the signal peptide cleavage has not been experimentally proven.

The protein resides in the periplasm. Its function is as follows. Cell division protein that is required for growth during stress conditions. May be involved in protecting or stabilizing the divisomal assembly under conditions of stress. This chain is Cell division protein FtsP, found in Pectobacterium atrosepticum (strain SCRI 1043 / ATCC BAA-672) (Erwinia carotovora subsp. atroseptica).